A 173-amino-acid chain; its full sequence is Ribosome maturation factor RimM (173 aa).

Residues 95 to 169 (EGSYYFKDIL…RIEVTLLEGL (75 aa)) enclose the PRC barrel domain.

This sequence belongs to the RimM family. Binds ribosomal protein uS19.

It localises to the cytoplasm. Functionally, an accessory protein needed during the final step in the assembly of 30S ribosomal subunit, possibly for assembly of the head region. Essential for efficient processing of 16S rRNA. May be needed both before and after RbfA during the maturation of 16S rRNA. It has affinity for free ribosomal 30S subunits but not for 70S ribosomes. This chain is Ribosome maturation factor RimM, found in Lactobacillus gasseri (strain ATCC 33323 / DSM 20243 / BCRC 14619 / CIP 102991 / JCM 1131 / KCTC 3163 / NCIMB 11718 / NCTC 13722 / AM63).